Consider the following 445-residue polypeptide: Mutanase Pc12g07500 (445 aa).

Residues 1 to 21 (MIWKSLFSALAILTHILPALT) form the signal peptide. N-linked (GlcNAc...) asparagine glycans are attached at residues N386 and N437.

Belongs to the glycosyl hydrolase 71 family. As to quaternary structure, monomer.

Its subcellular location is the secreted. The enzyme catalyses Endohydrolysis of (1-&gt;3)-alpha-D-glucosidic linkages in isolichenin, pseudonigeran and nigeran.. In terms of biological role, hydrolyzes 1,3-alpha-glucan predominantly into pentasaccharides. May enhance the efficacy of fungal antibiotics by degrading bacterial exopolysaccharides. The polypeptide is Mutanase Pc12g07500 (Penicillium rubens (strain ATCC 28089 / DSM 1075 / NRRL 1951 / Wisconsin 54-1255) (Penicillium chrysogenum)).